The chain runs to 397 residues: Putative galactokinase (397 aa).

Residue S78 coordinates ATP. D182 acts as the Proton acceptor in catalysis.

It belongs to the GHMP kinase family. GalK subfamily.

The protein resides in the cytoplasm. The enzyme catalyses alpha-D-galactose + ATP = alpha-D-galactose 1-phosphate + ADP + H(+). It functions in the pathway carbohydrate metabolism; galactose metabolism. Catalyzes the transfer of the gamma-phosphate of ATP to D-galactose to form alpha-D-galactose-1-phosphate (Gal-1-P). The polypeptide is Putative galactokinase (galK) (Treponema pallidum (strain Nichols)).